Reading from the N-terminus, the 307-residue chain is Leucine-rich repeat-containing protein 59 (307 aa).

N-acetylmethionine is present on Met1. The residue at position 2 (Thr2) is an N-acetylthreonine; in Leucine-rich repeat-containing protein 59, N-terminally processed. Topologically, residues 2–244 (TKAGSKGGNL…KPPPRKHTRS (243 aa)) are cytoplasmic. LRR repeat units lie at residues 10–31 (NLRDKLDGNELDLSLSDLNEVP), 40–62 (KATVLDLSCNKLSTLPSDFCGLT), 63–84 (HLVKLDLSKNKLQQLPADFGRL), 86–107 (NLQHLDLLNNRLVTLPVSFAQL), and 109–128 (NLKWLDLKDNPLDPVLAKVA). 2 positions are modified to phosphoserine: Ser23 and Ser25. Position 73 is an N6-succinyllysine (Lys73). An N6-acetyllysine modification is found at Lys135. A coiled-coil region spans residues 148-216 (MKAVQADQER…KASKREQEKK (69 aa)). The interval 150-241 (AVQADQERER…RPRKPPPRKH (92 aa)) is disordered. Residues 154 to 221 (DQERERQRRL…EQEKKPKKEA (68 aa)) are compositionally biased toward basic and acidic residues. Basic residues predominate over residues 229-241 (SGSRPRKPPPRKH). The helical transmembrane segment at 245-265 (WAVLKVLLLLLLLCVAGGLVV) threads the bilayer. The Lumenal segment spans residues 266–307 (CRVTGLHQQPLCTSVNTIYDNAVQGLRHHEILQWVLQTDSQQ).

Can form homodimers. Interacts with SGO1. Interacts with FGF1.

The protein resides in the microsome membrane. The protein localises to the endoplasmic reticulum membrane. It localises to the nucleus envelope. Functionally, required for nuclear import of FGF1, but not that of FGF2. Might regulate nuclear import of exogenous FGF1 by facilitating interaction with the nuclear import machinery and by transporting cytosolic FGF1 to, and possibly through, the nuclear pores. The polypeptide is Leucine-rich repeat-containing protein 59 (Lrrc59) (Mus musculus (Mouse)).